A 150-amino-acid chain; its full sequence is Putative STAG3-like protein 4 (150 aa).

This sequence belongs to the SCC3 family.

In Homo sapiens (Human), this protein is Putative STAG3-like protein 4 (STAG3L4).